The following is a 163-amino-acid chain: Inner membrane protein YcdZ (163 aa).

Topologically, residues 1-2 (MN) are cytoplasmic. A helical membrane pass occupies residues 3–23 (ILLSIAITTGILSGIWGWVAV). Ser24 is a topological domain (periplasmic). Residues 25–45 (LGLLSWAGFLGCTAYFACPQG) traverse the membrane as a helical segment. Residues 46–48 (GLK) are Cytoplasmic-facing. A helical membrane pass occupies residues 49-69 (GLAISAATLLSGVVWAMVIIY). Topologically, residues 70–71 (GS) are periplasmic. A helical membrane pass occupies residues 72–92 (ALAPHLEILGYVITGIVAFLM). The Cytoplasmic portion of the chain corresponds to 93–98 (CIQAKQ). A helical membrane pass occupies residues 99–119 (LLLSFVPGTFIGACATFAGQG). Residues 120–122 (DWK) are Periplasmic-facing. The chain crosses the membrane as a helical span at residues 123–143 (LVLPSLALGLIFGYAMKNSGL). Over 144-163 (WLAARSAKTAHREQEIKNKA) the chain is Cytoplasmic.

The protein to E.coli YahC.

The protein resides in the cell inner membrane. This Escherichia coli (strain K12) protein is Inner membrane protein YcdZ (ycdZ).